The following is a 530-amino-acid chain: Arginine--tRNA ligase (530 aa).

The 'HIGH' region signature appears at 113 to 123 (ANPTGPLHIGH).

Belongs to the class-I aminoacyl-tRNA synthetase family. Monomer.

It is found in the cytoplasm. It catalyses the reaction tRNA(Arg) + L-arginine + ATP = L-arginyl-tRNA(Arg) + AMP + diphosphate. This is Arginine--tRNA ligase from Campylobacter jejuni subsp. jejuni serotype O:23/36 (strain 81-176).